The sequence spans 408 residues: Tryptophan synthase beta chain (408 aa).

Residue lysine 103 is modified to N6-(pyridoxal phosphate)lysine.

This sequence belongs to the TrpB family. As to quaternary structure, tetramer of two alpha and two beta chains. Pyridoxal 5'-phosphate serves as cofactor.

The enzyme catalyses (1S,2R)-1-C-(indol-3-yl)glycerol 3-phosphate + L-serine = D-glyceraldehyde 3-phosphate + L-tryptophan + H2O. It participates in amino-acid biosynthesis; L-tryptophan biosynthesis; L-tryptophan from chorismate: step 5/5. Its function is as follows. The beta subunit is responsible for the synthesis of L-tryptophan from indole and L-serine. The protein is Tryptophan synthase beta chain of Koribacter versatilis (strain Ellin345).